The sequence spans 94 residues: Small nuclear ribonucleoprotein E (94 aa).

The Sm domain occupies 14 to 94 (INCIFNFLQQ…DNITLITSAD (81 aa)).

This sequence belongs to the snRNP Sm proteins family. In terms of assembly, component of the Sm core complex, present in spliceosomal snRNP U1, U2, U4/U6 and U5. The core complex contains SMB1, SMD1, SMD2, SMD3, SME1, SMX3 and SMX2 (Sm proteins B, D1, D2, D3, E, F and G, respectively), and is probably a heptameric ring structure. SME1 specifically interacts with SMX2 and SMX3. Component of the U4/U6-U5 tri-snRNP complex composed of the U4, U6 and U5 snRNAs and at least PRP3, PRP4, PRP6, PRP8, PRP18, PRP31, PRP38, SNU13, SNU23, SNU66, SNU114, SPP381, SMB1, SMD1, SMD2, SMD3, SMX2, SMX3, LSM2, LSM3, LSM4, LSM5, LSM6, LSM7, LSM8, BRR2 and DIB1.

The protein localises to the cytoplasm. It is found in the nucleus. Involved in pre-mRNA splicing. Binds and is required for the stability of snRNA U1, U2, U4 and U5 which contain a highly conserved structural motif called the Sm binding site. Involved in cap modification. This chain is Small nuclear ribonucleoprotein E (SME1), found in Saccharomyces cerevisiae (strain ATCC 204508 / S288c) (Baker's yeast).